The sequence spans 232 residues: Phosphate-specific transport system accessory protein PhoU homolog 1 (232 aa).

Belongs to the PhoU family. In terms of assembly, homodimer.

The protein localises to the cytoplasm. Functionally, plays a role in the regulation of phosphate uptake. The protein is Phosphate-specific transport system accessory protein PhoU homolog 1 (phoU1) of Thermotoga maritima (strain ATCC 43589 / DSM 3109 / JCM 10099 / NBRC 100826 / MSB8).